A 204-amino-acid polypeptide reads, in one-letter code: Ribonuclease HII (204 aa).

Residues 1–197 (MILGIDEAGR…KNRILNPKLL (197 aa)) form the RNase H type-2 domain. Residues D6, E7, and D103 each coordinate a divalent metal cation.

The protein belongs to the RNase HII family. Mn(2+) is required as a cofactor. Requires Mg(2+) as cofactor.

It localises to the cytoplasm. It catalyses the reaction Endonucleolytic cleavage to 5'-phosphomonoester.. Its function is as follows. Endonuclease that specifically degrades the RNA of RNA-DNA hybrids. The protein is Ribonuclease HII of Helicobacter pylori (strain G27).